The sequence spans 302 residues: MAGRELSHLQQLEAESIQIIREVAAEFDNPVMLYSIGKDSSVMLHLARKAFYPGKIPFPLLHVDTGWKFKEMIAFRDAQAKKFGFELLTHTNPEGVAQGINPFDHGSAKHTDIMKTQGLKQALNQYGFDAAFGGARRDEEKSRAKERVYSFRDRHHRWDPKNQRPELWRTYNGAVNKGESIRVFPLSNWTELDIWQYIYQENIELVPLYFAAERPVVERGGQLIMADDERMKLEEGETIKHEVVRFRTLGCYPLTAAMHSQADNLEKIIEEMLLTRSSERQGRLIDSDQSASMEQKKRQGYF.

A disordered region spans residues 280–302 (RQGRLIDSDQSASMEQKKRQGYF).

The protein belongs to the PAPS reductase family. CysD subfamily. In terms of assembly, heterodimer composed of CysD, the smaller subunit, and CysN.

It carries out the reaction sulfate + ATP + H(+) = adenosine 5'-phosphosulfate + diphosphate. Its pathway is sulfur metabolism; hydrogen sulfide biosynthesis; sulfite from sulfate: step 1/3. In terms of biological role, with CysN forms the ATP sulfurylase (ATPS) that catalyzes the adenylation of sulfate producing adenosine 5'-phosphosulfate (APS) and diphosphate, the first enzymatic step in sulfur assimilation pathway. APS synthesis involves the formation of a high-energy phosphoric-sulfuric acid anhydride bond driven by GTP hydrolysis by CysN coupled to ATP hydrolysis by CysD. The polypeptide is Sulfate adenylyltransferase subunit 2 (Shewanella sp. (strain ANA-3)).